Reading from the N-terminus, the 63-residue chain is MKANELREKSVEELNTELLNLLREEFNLRMQAAGGQLQQSHLLKQVRRNIARVKTLLNEKAGA.

The protein belongs to the universal ribosomal protein uL29 family.

The protein is Large ribosomal subunit protein uL29 of Edwardsiella ictaluri (strain 93-146).